Reading from the N-terminus, the 108-residue chain is ATPase inhibitor, mitochondrial (108 aa).

Residues 1-25 constitute a mitochondrion transit peptide; the sequence is MAATALAVRSRIGAWSVWAMQSRGF. The tract at residues 25–48 is disordered; it reads FSSDTPEGVRSGAGAVRDAGGAFG. The N-terminal inhibitory region stretch occupies residues 26–52; the sequence is SSDTPEGVRSGAGAVRDAGGAFGKKEQ. Residues 69–108 adopt a coiled-coil conformation; that stretch reads ALKKHHENEISHHVKEIERLQKEIERHKQSIKKLKNDDDD. Positions 74 to 106 are antiparallel alpha-helical coiled coil region; sequence HENEISHHVKEIERLQKEIERHKQSIKKLKNDD. Lysine 103 carries the post-translational modification N6-succinyllysine.

This sequence belongs to the ATPase inhibitor family. Homodimer; represents the active form and is present at a pH value below 6.5. Homotetramer; represents the inactive form and is present at a pH value above 7.0.

The protein localises to the mitochondrion. Endogenous F(1)F(o)-ATPase inhibitor limiting ATP depletion when the mitochondrial membrane potential falls below a threshold and the F(1)F(o)-ATP synthase starts hydrolyzing ATP to pump protons out of the mitochondrial matrix. Required to avoid the consumption of cellular ATP when the F(1)F(o)-ATP synthase enzyme acts as an ATP hydrolase. Indirectly acts as a regulator of heme synthesis in erythroid tissues: regulates heme synthesis by modulating the mitochondrial pH and redox potential, allowing FECH to efficiently catalyze the incorporation of iron into protoporphyrin IX to produce heme. In Sus scrofa (Pig), this protein is ATPase inhibitor, mitochondrial.